Reading from the N-terminus, the 33-residue chain is uncharacterized protein (33 aa).

This is an uncharacterized protein from Staphylococcus aureus (strain MW2).